The following is a 311-amino-acid chain: Ornithine carbamoyltransferase (311 aa).

Residues 57-60, Gln-84, Arg-108, and 135-138 each bind carbamoyl phosphate; these read STRT and HPCQ. L-ornithine-binding positions include Asn-166, Asp-230, and 234–235; that span reads SM. Residues 270 to 271 and Arg-298 contribute to the carbamoyl phosphate site; that span reads CL.

Belongs to the aspartate/ornithine carbamoyltransferase superfamily. OTCase family.

It is found in the cytoplasm. The catalysed reaction is carbamoyl phosphate + L-ornithine = L-citrulline + phosphate + H(+). It participates in amino-acid biosynthesis; L-arginine biosynthesis; L-arginine from L-ornithine and carbamoyl phosphate: step 1/3. Reversibly catalyzes the transfer of the carbamoyl group from carbamoyl phosphate (CP) to the N(epsilon) atom of ornithine (ORN) to produce L-citrulline. In Carboxydothermus hydrogenoformans (strain ATCC BAA-161 / DSM 6008 / Z-2901), this protein is Ornithine carbamoyltransferase.